The primary structure comprises 270 residues: Undecaprenyl-diphosphatase (270 aa).

The next 7 membrane-spanning stretches (helical) occupy residues 1 to 21 (MTWW…FIPV), 92 to 112 (FRLG…YVLF), 119 to 139 (AFGS…LLLL), 150 to 170 (LSGV…VPGI), 193 to 213 (FSFL…GLEL), 223 to 243 (LSLG…IYVV), and 250 to 270 (GNLQ…LWLL).

Belongs to the UppP family.

Its subcellular location is the cell inner membrane. The enzyme catalyses di-trans,octa-cis-undecaprenyl diphosphate + H2O = di-trans,octa-cis-undecaprenyl phosphate + phosphate + H(+). Functionally, catalyzes the dephosphorylation of undecaprenyl diphosphate (UPP). Confers resistance to bacitracin. The chain is Undecaprenyl-diphosphatase from Salinibacter ruber (strain DSM 13855 / M31).